A 937-amino-acid chain; its full sequence is Protein translocase subunit SecA (937 aa).

ATP is bound by residues Q90, 108–112 (GEGKT), and D509.

The protein belongs to the SecA family. In terms of assembly, monomer and homodimer. Part of the essential Sec protein translocation apparatus which comprises SecA, SecYEG and auxiliary proteins SecDF. Other proteins may also be involved.

It localises to the cell inner membrane. It is found in the cellular thylakoid membrane. The protein localises to the cytoplasm. It catalyses the reaction ATP + H2O + cellular proteinSide 1 = ADP + phosphate + cellular proteinSide 2.. Part of the Sec protein translocase complex. Interacts with the SecYEG preprotein conducting channel. Has a central role in coupling the hydrolysis of ATP to the transfer of proteins into and across the cell membrane, serving as an ATP-driven molecular motor driving the stepwise translocation of polypeptide chains across the membrane. Functionally, probably participates in protein translocation into and across both the cytoplasmic and thylakoid membranes in cyanobacterial cells. This is Protein translocase subunit SecA from Synechococcus sp. (strain CC9902).